The chain runs to 470 residues: MDERFNKWLLTPVLTLLFVVIMYQYVSPSCTSSCTNFGEQLRSGEARPPAVPSPARRAQAPLDEWERRPQLPPPPRGPPEGSRGVAAPEDEDEDPGDPEEEEEEEEEEPDPEAPENGSLPRFVPRFNFTLKDLTRFVDFNIKGRDVIVFLHIQKTGGTTFGRHLVKNIRLEQPCSCKAGQKKCTCHRPGKKETWLFSRFSTGWSCGLHADWTELTNCVPAIMEKKDCPRNHSHTRNFYYITMLRDPVSRYLSEWKHVQRGATWKTSLHMCDGRSPTPDELPTCYPGDDWSGVSLREFMDCSYNLANNRQVRMLADLSLVGCYNLTFMNESERNTILLQSAKNNLKNMAFFGLTEFQRKTQFLFERTFNLKFISPFTQFNITRASNVDINDGARQHIEELNFLDMQLYEYAKDLFQQRYHHTKQLEHQRDRQKRREERRLQREHRAHRWPKEDRAMEGTVTEDYNSQVVRW.

Over 1 to 4 (MDER) the chain is Cytoplasmic. The helical; Signal-anchor for type II membrane protein transmembrane segment at 5–27 (FNKWLLTPVLTLLFVVIMYQYVS) threads the bilayer. Residues 28–470 (PSCTSSCTNF…EDYNSQVVRW (443 aa)) are Lumenal-facing. Residues 36-121 (NFGEQLRSGE…EAPENGSLPR (86 aa)) are disordered. Over residues 88–113 (PEDEDEDPGDPEEEEEEEEEEPDPEA) the composition is skewed to acidic residues. 2 N-linked (GlcNAc...) asparagine glycosylation sites follow: Asn-116 and Asn-127. 151-159 (HIQKTGGTT) contributes to the 3'-phosphoadenylyl sulfate binding site. Substrate is bound by residues 181–182 (KK), Arg-198, Trp-203, and His-208. His-208 serves as the catalytic Proton acceptor. N-linked (GlcNAc...) asparagine glycosylation occurs at Asn-230. 2 residues coordinate 3'-phosphoadenylyl sulfate: Arg-244 and Ser-252. Substrate-binding residues include His-256 and Trp-263. N-linked (GlcNAc...) asparagine glycans are attached at residues Asn-323 and Asn-328. Residue 376–378 (TQF) participates in 3'-phosphoadenylyl sulfate binding. An N-linked (GlcNAc...) asparagine glycan is attached at Asn-379. 382–383 (RA) contributes to the 3'-phosphoadenylyl sulfate binding site. The interval 421–453 (TKQLEHQRDRQKRREERRLQREHRAHRWPKEDR) is disordered. A compositionally biased stretch (basic and acidic residues) spans 422–439 (KQLEHQRDRQKRREERRL).

The protein belongs to the sulfotransferase 6 family. In terms of tissue distribution, ubiquitously expressed.

It localises to the membrane. The catalysed reaction is alpha-D-glucosaminyl-[heparan sulfate](n) + 3'-phosphoadenylyl sulfate = 6-sulfo-alpha-D-glucosaminyl-[heparan sulfate](n) + adenosine 3',5'-bisphosphate + H(+). Functionally, 6-O-sulfation enzyme which catalyzes the transfer of sulfate from 3'-phosphoadenosine 5'-phosphosulfate (PAPS) to position 6 of the N-sulfoglucosamine residue (GlcNS) of heparan sulfate. This chain is Heparan-sulfate 6-O-sulfotransferase 3 (Hs6st3), found in Mus musculus (Mouse).